A 341-amino-acid chain; its full sequence is HTH-type transcriptional repressor PurR (341 aa).

Positions 2 to 56 (ATIKDVAKRANVSTTTVSHVINKTRFVAEETRNAVWAAIKELHYSPSAVARSLKV) constitute an HTH lacI-type domain. Positions 4–23 (IKDVAKRANVSTTTVSHVIN) form a DNA-binding region, H-T-H motif. The DNA-binding element occupies 48–56 (SAVARSLKV). Hypoxanthine contacts are provided by Y73, R190, T192, F221, and D275.

Homodimer.

It participates in purine metabolism; purine nucleotide biosynthesis [regulation]. In terms of biological role, is the main repressor of the genes involved in the de novo synthesis of purine nucleotides, regulating purB, purC, purEK, purF, purHD, purL, purMN and guaBA expression. PurR is allosterically activated to bind its cognate DNA by binding the purine corepressors, hypoxanthine or guanine, thereby effecting transcription repression. This Escherichia fergusonii (strain ATCC 35469 / DSM 13698 / CCUG 18766 / IAM 14443 / JCM 21226 / LMG 7866 / NBRC 102419 / NCTC 12128 / CDC 0568-73) protein is HTH-type transcriptional repressor PurR.